The sequence spans 196 residues: Holliday junction branch migration complex subunit RuvA (196 aa).

Positions 1-63 are domain I; that stretch reads MINKIYGKIV…DDDVKLFGFL (63 aa). Positions 64–142 are domain II; the sequence is NISEREVFED…KGDESSSYML (79 aa). K143 is a region of interest (flexible linker). A domain III region spans residues 143–196; the sequence is KFKELEQSIVNMGFDRKLVVVAFREIMLSDKFLILKEAEQEQFLFTETLKRLSV.

Belongs to the RuvA family. As to quaternary structure, homotetramer. Forms an RuvA(8)-RuvB(12)-Holliday junction (HJ) complex. HJ DNA is sandwiched between 2 RuvA tetramers; dsDNA enters through RuvA and exits via RuvB. An RuvB hexamer assembles on each DNA strand where it exits the tetramer. Each RuvB hexamer is contacted by two RuvA subunits (via domain III) on 2 adjacent RuvB subunits; this complex drives branch migration. In the full resolvosome a probable DNA-RuvA(4)-RuvB(12)-RuvC(2) complex forms which resolves the HJ.

The protein resides in the cytoplasm. In terms of biological role, the RuvA-RuvB-RuvC complex processes Holliday junction (HJ) DNA during genetic recombination and DNA repair, while the RuvA-RuvB complex plays an important role in the rescue of blocked DNA replication forks via replication fork reversal (RFR). RuvA specifically binds to HJ cruciform DNA, conferring on it an open structure. The RuvB hexamer acts as an ATP-dependent pump, pulling dsDNA into and through the RuvAB complex. HJ branch migration allows RuvC to scan DNA until it finds its consensus sequence, where it cleaves and resolves the cruciform DNA. In Borrelia duttonii (strain Ly), this protein is Holliday junction branch migration complex subunit RuvA.